Consider the following 131-residue polypeptide: Small ribosomal subunit protein uS8 (131 aa).

The protein belongs to the universal ribosomal protein uS8 family. Part of the 30S ribosomal subunit. Contacts proteins S5 and S12.

Its function is as follows. One of the primary rRNA binding proteins, it binds directly to 16S rRNA central domain where it helps coordinate assembly of the platform of the 30S subunit. The chain is Small ribosomal subunit protein uS8 from Campylobacter jejuni subsp. jejuni serotype O:23/36 (strain 81-176).